A 606-amino-acid chain; its full sequence is MTVLGHPRSWSCRWWPLLLLLLLTGREPGVEGVTHYKAGDPVILYVNKVGPYHNPQETYHYYQLPVCCPEKIRHKSLSLGEVLDGDRMAESLYEIRFRENVEKRVLCHMQLSSAQVEQLRQAIEELYYFEFVVDDLPIRGFVGYMEESGFLPHSHKIGLWTHLDFHLEFHGDRIIFANVSVRDVKPHSLDGLRPDEFLGLTHTYSVRWSETSVERRSDRRRGDDGGFFPRTLEIHWLSIINSMVLVFLLVGFVAVILMRVLRNDLARYNLDEETASAGSGDDFDQSDNGWKIIHTDVFRFPPYRGLLCAVLGVGAQFLALGTGIIVMALLGMFNVHRHGAINSAAILLYALTCCISGYVSSHFYRQIGGERWVWNIILTTSLFSVPFFLTWSVVNSVHWANGSTQALPATTILLLLTVWLLVGFPLTVIGGIFGKNNASPFDAPCRTKNIAREIPPQPWYKSTLVHMTVGGFLPFSAISVELYYIFATVWGREQYTLYGILFFVFAILLSVGACISIALTYFQLSGEDYRWWWRSVLSVGSTGLFIFLYSVFYYARRSNMSGTVQTVEFFGYSLLTGYVFFLMLGTISFFSSLKFIRYIYVNLKMD.

The N-terminal stretch at 1 to 27 is a signal peptide; that stretch reads MTVLGHPRSWSCRWWPLLLLLLLTGRE. An N-linked (GlcNAc...) asparagine glycan is attached at asparagine 178. Transmembrane regions (helical) follow at residues 237-257, 310-330, 339-359, and 373-393; these read LSII…AVIL, VLGV…MALL, GAIN…SGYV, and VWNI…TWSV. N-linked (GlcNAc...) asparagine glycosylation occurs at asparagine 401. The next 4 helical transmembrane spans lie at 412–432, 469–489, 499–519, and 535–555; these read ILLL…IGGI, VGGF…FATV, GILF…SIAL, and SVLS…FYYA. N-linked (GlcNAc...) asparagine glycosylation is present at asparagine 559. Residues 570–590 form a helical membrane-spanning segment; it reads FGYSLLTGYVFFLMLGTISFF.

It belongs to the nonaspanin (TM9SF) (TC 9.A.2) family.

The protein localises to the lysosome membrane. Its subcellular location is the cytoplasmic vesicle. The protein resides in the autophagosome membrane. Functionally, plays an essential role in autophagy. This chain is Transmembrane 9 superfamily member 1 (TM9SF1), found in Bos taurus (Bovine).